Reading from the N-terminus, the 483-residue chain is FAD-linked oxidoreductase easE (483 aa).

Residues 10–193 (QGRLPLYSAV…TEATVRVFSD (184 aa)) enclose the FAD-binding PCMH-type domain.

It belongs to the oxygen-dependent FAD-linked oxidoreductase family. It depends on FAD as a cofactor.

Its pathway is alkaloid biosynthesis; ergot alkaloid biosynthesis. FAD-linked oxidoreductase; part of the gene cluster that mediates the biosynthesis of fungal ergot alkaloid. DmaW catalyzes the first step of ergot alkaloid biosynthesis by condensing dimethylallyl diphosphate (DMAP) and tryptophan to form 4-dimethylallyl-L-tryptophan. The second step is catalyzed by the methyltransferase easF that methylates 4-dimethylallyl-L-tryptophan in the presence of S-adenosyl-L-methionine, resulting in the formation of 4-dimethylallyl-L-abrine. The catalase easC and the FAD-dependent oxidoreductase easE then transform 4-dimethylallyl-L-abrine to chanoclavine-I which is further oxidized by easD in the presence of NAD(+), resulting in the formation of chanoclavine-I aldehyde. Agroclavine dehydrogenase easG then mediates the conversion of chanoclavine-I aldehyde to agroclavine via a non-enzymatic adduct reaction: the substrate is an iminium intermediate that is formed spontaneously from chanoclavine-I aldehyde in the presence of glutathione. The presence of easA is not required to complete this reaction. Further conversion of agroclavine to paspalic acid is a two-step process involving oxidation of agroclavine to elymoclavine and of elymoclavine to paspalic acid, the second step being performed by the elymoclavine oxidase cloA. Paspalic acid is then further converted to D-lysergic acid. Ergopeptines are assembled from D-lysergic acid and three different amino acids by the D-lysergyl-peptide-synthetases composed each of a monomudular and a trimodular nonribosomal peptide synthetase subunit. LpsB and lpsC encode the monomodular subunits responsible for D-lysergic acid activation and incorporation into the ergopeptine backbone. LpsA1 and A2 subunits encode the trimodular nonribosomal peptide synthetase assembling the tripeptide portion of ergopeptines. LpsA1 is responsible for formation of the major ergopeptine, ergotamine, and lpsA2 for alpha-ergocryptine, the minor ergopeptine of the total alkaloid mixture elaborated by C.purpurea. D-lysergyl-tripeptides are assembled by the nonribosomal peptide synthetases and released as N-(D-lysergyl-aminoacyl)-lactams. Cyclolization of the D-lysergyl-tripeptides is performed by the Fe(2+)/2-ketoglutarate-dependent dioxygenase easH which introduces a hydroxyl group into N-(D-lysergyl-aminoacyl)-lactam at alpha-C of the aminoacyl residue followed by spontaneous condensation with the terminal lactam carbonyl group. The polypeptide is FAD-linked oxidoreductase easE (Claviceps purpurea (Ergot fungus)).